The chain runs to 348 residues: 3-keto-steroid reductase (348 aa).

Residues Leu18, Thr41, and Arg47 each coordinate NADP(+). Catalysis depends on proton donor residues Ser180 and Tyr203. Residues Tyr203, Lys207, and Ser238 each coordinate NADP(+). Lys207 (lowers pKa of active site Tyr) is an active-site residue.

It belongs to the short-chain dehydrogenases/reductases (SDR) family. ERG27 subfamily.

It carries out the reaction a 3beta-hydroxysteroid + NADP(+) = a 3-oxosteroid + NADPH + H(+). The protein operates within steroid biosynthesis; zymosterol biosynthesis; zymosterol from lanosterol: step 5/6. Functionally, responsible for the reduction of the keto group on the C-3 of sterols. The chain is 3-keto-steroid reductase (ERG27) from Candida glabrata (strain ATCC 2001 / BCRC 20586 / JCM 3761 / NBRC 0622 / NRRL Y-65 / CBS 138) (Yeast).